We begin with the raw amino-acid sequence, 117 residues long: Ribonuclease P protein component 4 (117 aa).

Positions 63, 66, 92, and 95 each coordinate Zn(2+).

The protein belongs to the eukaryotic/archaeal RNase P protein component 4 family. Consists of a catalytic RNA component and at least 4 protein subunits. Forms a subcomplex with Rnp1 which stimulates the catalytic RNA. Zn(2+) is required as a cofactor.

It is found in the cytoplasm. It catalyses the reaction Endonucleolytic cleavage of RNA, removing 5'-extranucleotides from tRNA precursor.. In terms of biological role, part of ribonuclease P, a protein complex that generates mature tRNA molecules by cleaving their 5'-ends. The RNA is catalytic, but its KM for pre-tRNA is 170-fold decreased in the presence of the 4 known protein subunits (Rnp1-4). The protein subunits also decrease the amount of Mg(2+) needed for activity. The protein is Ribonuclease P protein component 4 of Pyrococcus furiosus (strain ATCC 43587 / DSM 3638 / JCM 8422 / Vc1).